The chain runs to 117 residues: MDWNWRILFLVVATTGAHSQVQLVQSWAEVRKSGASVKVSCSFSGFTITSYGIHWVQQSPGQGLEWMGWINPGNGSPSYAKKFQGRFTMTRDMSTTTAYTDLSSLTSEDMAVYYYAR.

A signal peptide spans 1–19 (MDWNWRILFLVVATTGAHS). A framework-1 region spans residues 20 to 44 (QVQLVQSWAEVRKSGASVKVSCSFS). Residues 20 to 117 (QVQLVQSWAE…EDMAVYYYAR (98 aa)) enclose the Ig-like domain. The tract at residues 45 to 52 (GFTITSYG) is complementarity-determining-1. The tract at residues 53 to 69 (IHWVQQSPGQGLEWMGW) is framework-2. The segment at 70–77 (INPGNGSP) is complementarity-determining-2. N-linked (GlcNAc...) asparagine glycosylation occurs at asparagine 74. The framework-3 stretch occupies residues 78–115 (SYAKKFQGRFTMTRDMSTTTAYTDLSSLTSEDMAVYYY). Residues 116-117 (AR) are complementarity-determining-3.

In terms of assembly, most probably, the immunoglobulin is not assembled due to incorrect folding of heavy chain. Immunoglobulins are composed of two identical heavy chains and two identical light chains; disulfide-linked.

It is found in the secreted. The protein localises to the cell membrane. Its function is as follows. Probable non-functional open reading frame (ORF) of V region of the variable domain of immunoglobulin heavy chains. Non-functional ORF generally cannot participate in the synthesis of a productive immunoglobulin chain due to altered V-(D)-J or switch recombination and/or splicing site (at mRNA level) and/or conserved amino acid change (protein level). Immunoglobulins, also known as antibodies, are membrane-bound or secreted glycoproteins produced by B lymphocytes. In the recognition phase of humoral immunity, the membrane-bound immunoglobulins serve as receptors which, upon binding of a specific antigen, trigger the clonal expansion and differentiation of B lymphocytes into immunoglobulins-secreting plasma cells. Secreted immunoglobulins mediate the effector phase of humoral immunity, which results in the elimination of bound antigens. The antigen binding site is formed by the variable domain of one heavy chain, together with that of its associated light chain. Thus, each immunoglobulin has two antigen binding sites with remarkable affinity for a particular antigen. The variable domains are assembled by a process called V-(D)-J rearrangement and can then be subjected to somatic hypermutations which, after exposure to antigen and selection, allow affinity maturation for a particular antigen. This is Probable non-functional immunoglobulin heavy variable 1-38-4 from Homo sapiens (Human).